The following is a 438-amino-acid chain: C4-dicarboxylate transport protein 1 (438 aa).

8 consecutive transmembrane segments (helical) span residues 20–42 (LYVQ…PSVA), 57–77 (LIKM…IAHI), 90–112 (ALFY…GNLV), 160–179 (VLQV…ALGK), 192–214 (AHAV…FGAM), 229–251 (LIGL…LGLI), 324–346 (LFIA…LLVA), and 361–383 (FITL…AIVF).

The protein belongs to the dicarboxylate/amino acid:cation symporter (DAACS) (TC 2.A.23) family.

It is found in the cell inner membrane. In terms of biological role, responsible for the transport of dicarboxylates such as succinate, fumarate, and malate from the periplasm across the membrane. This Bradyrhizobium diazoefficiens (strain JCM 10833 / BCRC 13528 / IAM 13628 / NBRC 14792 / USDA 110) protein is C4-dicarboxylate transport protein 1.